The primary structure comprises 155 residues: Small ribosomal subunit protein uS7c (155 aa).

The protein belongs to the universal ribosomal protein uS7 family. Part of the 30S ribosomal subunit.

It localises to the plastid. The protein resides in the chloroplast. Functionally, one of the primary rRNA binding proteins, it binds directly to 16S rRNA where it nucleates assembly of the head domain of the 30S subunit. The polypeptide is Small ribosomal subunit protein uS7c (rps7) (Aristolochia macrophylla (Dutchman's pipe vine)).